A 422-amino-acid chain; its full sequence is Gamma-glutamyl phosphate reductase (422 aa).

This sequence belongs to the gamma-glutamyl phosphate reductase family.

It is found in the cytoplasm. The catalysed reaction is L-glutamate 5-semialdehyde + phosphate + NADP(+) = L-glutamyl 5-phosphate + NADPH + H(+). It participates in amino-acid biosynthesis; L-proline biosynthesis; L-glutamate 5-semialdehyde from L-glutamate: step 2/2. Its function is as follows. Catalyzes the NADPH-dependent reduction of L-glutamate 5-phosphate into L-glutamate 5-semialdehyde and phosphate. The product spontaneously undergoes cyclization to form 1-pyrroline-5-carboxylate. This Saccharophagus degradans (strain 2-40 / ATCC 43961 / DSM 17024) protein is Gamma-glutamyl phosphate reductase.